The sequence spans 314 residues: MDVLKISPRGYCYGVVDAMVMARQAAQNLDLPRPLYILGQIVHNQHVTDAFKEDGIISLDGPNRLEILKNVTHGTVIFTAHGVSPEVRRLAKEKGLTCIDATCPDVTRTHDLIREKAEEGYQFIYIGKQGHPEPEGAMGVAPDSVHLVETMEDLEQLTLDDRDIIITNQTTMSQWDVADIMKRAMELYPNAEVHNEICLATQVRQEAVAEQASQCDIVIVVGDPKSNNSNRLAQVSEQIAGTPAYRIGDLSELKLEWIKEAKKVGVTSGASTPTPITKEVITFIENYDPNDESTWDTAKKVPIEKILPKVRVKK.

Residue Cys-12 coordinates [4Fe-4S] cluster. (2E)-4-hydroxy-3-methylbut-2-enyl diphosphate contacts are provided by His-43 and His-81. Residues His-43 and His-81 each coordinate dimethylallyl diphosphate. 2 residues coordinate isopentenyl diphosphate: His-43 and His-81. Cys-103 provides a ligand contact to [4Fe-4S] cluster. Position 131 (His-131) interacts with (2E)-4-hydroxy-3-methylbut-2-enyl diphosphate. His-131 lines the dimethylallyl diphosphate pocket. His-131 is an isopentenyl diphosphate binding site. Glu-133 acts as the Proton donor in catalysis. Thr-170 is a binding site for (2E)-4-hydroxy-3-methylbut-2-enyl diphosphate. Residue Cys-198 participates in [4Fe-4S] cluster binding. 3 residues coordinate (2E)-4-hydroxy-3-methylbut-2-enyl diphosphate: Ser-226, Asn-228, and Ser-271. Residues Ser-226, Asn-228, and Ser-271 each contribute to the dimethylallyl diphosphate site. The isopentenyl diphosphate site is built by Ser-226, Asn-228, and Ser-271.

This sequence belongs to the IspH family. [4Fe-4S] cluster serves as cofactor.

The catalysed reaction is isopentenyl diphosphate + 2 oxidized [2Fe-2S]-[ferredoxin] + H2O = (2E)-4-hydroxy-3-methylbut-2-enyl diphosphate + 2 reduced [2Fe-2S]-[ferredoxin] + 2 H(+). It carries out the reaction dimethylallyl diphosphate + 2 oxidized [2Fe-2S]-[ferredoxin] + H2O = (2E)-4-hydroxy-3-methylbut-2-enyl diphosphate + 2 reduced [2Fe-2S]-[ferredoxin] + 2 H(+). Its pathway is isoprenoid biosynthesis; dimethylallyl diphosphate biosynthesis; dimethylallyl diphosphate from (2E)-4-hydroxy-3-methylbutenyl diphosphate: step 1/1. It participates in isoprenoid biosynthesis; isopentenyl diphosphate biosynthesis via DXP pathway; isopentenyl diphosphate from 1-deoxy-D-xylulose 5-phosphate: step 6/6. Its function is as follows. Catalyzes the conversion of 1-hydroxy-2-methyl-2-(E)-butenyl 4-diphosphate (HMBPP) into a mixture of isopentenyl diphosphate (IPP) and dimethylallyl diphosphate (DMAPP). Acts in the terminal step of the DOXP/MEP pathway for isoprenoid precursor biosynthesis. The chain is 4-hydroxy-3-methylbut-2-enyl diphosphate reductase from Shouchella clausii (strain KSM-K16) (Alkalihalobacillus clausii).